A 1487-amino-acid polypeptide reads, in one-letter code: Chromosome partition protein MukB (1487 aa).

Gly-34–Ser-41 contacts ATP. 5 coiled-coil regions span residues Ser-297–Ala-426, Ala-460–Ser-666, Arg-781–Ala-806, Glu-836–Val-1111, and Val-1210–Ile-1266. The interval Pro-667–Arg-784 is flexible hinge.

The protein belongs to the SMC family. MukB subfamily. Homodimerization via its hinge domain. Binds to DNA via its C-terminal region. Interacts, and probably forms a ternary complex, with MukE and MukF via its C-terminal region. The complex formation is stimulated by calcium or magnesium. Interacts with tubulin-related protein FtsZ.

It is found in the cytoplasm. It localises to the nucleoid. Plays a central role in chromosome condensation, segregation and cell cycle progression. Functions as a homodimer, which is essential for chromosome partition. Involved in negative DNA supercoiling in vivo, and by this means organize and compact chromosomes. May achieve or facilitate chromosome segregation by condensation DNA from both sides of a centrally located replisome during cell division. This Vibrio vulnificus (strain CMCP6) protein is Chromosome partition protein MukB.